We begin with the raw amino-acid sequence, 363 residues long: Ribosomal RNA small subunit methyltransferase H (363 aa).

Residues 55-57, Asp75, Asp122, and Gln129 contribute to the S-adenosyl-L-methionine site; that span reads GGH.

It belongs to the methyltransferase superfamily. RsmH family.

It localises to the cytoplasm. The catalysed reaction is cytidine(1402) in 16S rRNA + S-adenosyl-L-methionine = N(4)-methylcytidine(1402) in 16S rRNA + S-adenosyl-L-homocysteine + H(+). Specifically methylates the N4 position of cytidine in position 1402 (C1402) of 16S rRNA. The chain is Ribosomal RNA small subunit methyltransferase H from Bordetella petrii (strain ATCC BAA-461 / DSM 12804 / CCUG 43448).